The chain runs to 219 residues: MSVPSRKIRLIMELRQNGVSATPVLAAIERVPRDAFVSAPFSDQAYENTALPIGCGQTISQPLVVGLMTQALDLNDRHKVLEIGTGSGYQTAVLARLCRRVYTIERHGALLREAEARLTALGLHRTVVTREGDGGRGWPEQAPFERILVTAAALDIPKVLVAQLAIGGVMVLPVGKESGAQEVVRVRRTAEDALVTERLFPVRFVPLVDGLPPRDAPGA.

Residue Ser-60 is part of the active site.

The protein belongs to the methyltransferase superfamily. L-isoaspartyl/D-aspartyl protein methyltransferase family.

The protein localises to the cytoplasm. It carries out the reaction [protein]-L-isoaspartate + S-adenosyl-L-methionine = [protein]-L-isoaspartate alpha-methyl ester + S-adenosyl-L-homocysteine. In terms of biological role, catalyzes the methyl esterification of L-isoaspartyl residues in peptides and proteins that result from spontaneous decomposition of normal L-aspartyl and L-asparaginyl residues. It plays a role in the repair and/or degradation of damaged proteins. The sequence is that of Protein-L-isoaspartate O-methyltransferase from Rhodospirillum rubrum (strain ATCC 11170 / ATH 1.1.1 / DSM 467 / LMG 4362 / NCIMB 8255 / S1).